We begin with the raw amino-acid sequence, 209 residues long: uncharacterized protein (209 aa).

4Fe-4S ferredoxin-type domains lie at 38 to 67, 63 to 92, 90 to 119, 122 to 151, 145 to 174, and 179 to 209; these read KTKP…IFSF, KIFS…KDRF, DRFT…KEIP, KTPV…EINP, INKE…TPDE, and LIVK…HRES. [4Fe-4S] cluster is bound by residues Cys47, Cys50, Cys53, Cys57, Cys72, Cys75, Cys78, Cys82, Cys99, Cys102, Cys105, and Cys109. [4Fe-4S] cluster is bound by residues Cys154, Cys157, Cys160, Cys164, Cys188, Cys191, Cys194, and Cys198.

This is an uncharacterized protein from Methanocaldococcus jannaschii (strain ATCC 43067 / DSM 2661 / JAL-1 / JCM 10045 / NBRC 100440) (Methanococcus jannaschii).